The following is an 813-amino-acid chain: Leucine--tRNA ligase (813 aa).

A 'HIGH' region motif is present at residues 41 to 51 (PYPSGTLHMGH). The short motif at 575 to 579 (KMSKS) is the 'KMSKS' region element. Residue lysine 578 participates in ATP binding.

This sequence belongs to the class-I aminoacyl-tRNA synthetase family.

It localises to the cytoplasm. The catalysed reaction is tRNA(Leu) + L-leucine + ATP = L-leucyl-tRNA(Leu) + AMP + diphosphate. In Francisella philomiragia subsp. philomiragia (strain ATCC 25017 / CCUG 19701 / FSC 153 / O#319-036), this protein is Leucine--tRNA ligase.